The chain runs to 231 residues: LexA repressor (231 aa).

Positions 26 to 46 (FDEMKDALDLRSKSGIHRLIT) form a DNA-binding region, H-T-H motif. Residues serine 152 and lysine 190 each act as for autocatalytic cleavage activity in the active site.

Belongs to the peptidase S24 family. As to quaternary structure, homodimer.

It carries out the reaction Hydrolysis of Ala-|-Gly bond in repressor LexA.. In terms of biological role, represses a number of genes involved in the response to DNA damage (SOS response), including recA and lexA. In the presence of single-stranded DNA, RecA interacts with LexA causing an autocatalytic cleavage which disrupts the DNA-binding part of LexA, leading to derepression of the SOS regulon and eventually DNA repair. This chain is LexA repressor, found in Bradyrhizobium diazoefficiens (strain JCM 10833 / BCRC 13528 / IAM 13628 / NBRC 14792 / USDA 110).